Reading from the N-terminus, the 479-residue chain is Glutathione gamma-glutamylcysteinyltransferase 3 (479 aa).

Residues 1–221 (MASAGLYRRV…GYMIISKLKR (221 aa)) form the Peptidase C83 domain. Catalysis depends on residues Cys56, His162, and Asp180.

Belongs to the phytochelatin synthase family. As to expression, expressed in roots, nodules and leaves.

It catalyses the reaction [Glu(-Cys)](n)-Gly + glutathione + H(+) = [Glu(-Cys)](n+1)-Gly + glycine. Its activity is regulated as follows. Requires cadmium for activity. Functionally, involved in the synthesis of phytochelatins (PC) and homophytochelatins (hPC), the heavy-metal-binding peptides of plants. This Lotus japonicus (Lotus corniculatus var. japonicus) protein is Glutathione gamma-glutamylcysteinyltransferase 3 (PCS3).